A 428-amino-acid chain; its full sequence is 3-phosphoshikimate 1-carboxyvinyltransferase (428 aa).

Lys22, Ser23, and Arg27 together coordinate 3-phosphoshikimate. Lys22 is a binding site for phosphoenolpyruvate. Phosphoenolpyruvate is bound by residues Gly94 and Arg122. Residues Ser169, Ser170, Gln171, Ser197, Asp315, and Lys342 each contribute to the 3-phosphoshikimate site. Position 171 (Gln171) interacts with phosphoenolpyruvate. Asp315 serves as the catalytic Proton acceptor. Residues Arg346, Arg389, and Lys414 each contribute to the phosphoenolpyruvate site.

The protein belongs to the EPSP synthase family. As to quaternary structure, monomer.

Its subcellular location is the cytoplasm. It catalyses the reaction 3-phosphoshikimate + phosphoenolpyruvate = 5-O-(1-carboxyvinyl)-3-phosphoshikimate + phosphate. It functions in the pathway metabolic intermediate biosynthesis; chorismate biosynthesis; chorismate from D-erythrose 4-phosphate and phosphoenolpyruvate: step 6/7. In terms of biological role, catalyzes the transfer of the enolpyruvyl moiety of phosphoenolpyruvate (PEP) to the 5-hydroxyl of shikimate-3-phosphate (S3P) to produce enolpyruvyl shikimate-3-phosphate and inorganic phosphate. The polypeptide is 3-phosphoshikimate 1-carboxyvinyltransferase (Cellvibrio japonicus (strain Ueda107) (Pseudomonas fluorescens subsp. cellulosa)).